The following is a 417-amino-acid chain: Phosphoribosylamine--glycine ligase (417 aa).

The 207-residue stretch at 107-313 (KQIMAKYEIP…FLEIIEATLE (207 aa)) folds into the ATP-grasp domain. 133 to 194 (LKETWYPVVI…EEMLYGKEAS (62 aa)) contacts ATP. Glutamate 283 and asparagine 285 together coordinate Mg(2+).

Belongs to the GARS family. It depends on Mg(2+) as a cofactor. Mn(2+) is required as a cofactor.

It catalyses the reaction 5-phospho-beta-D-ribosylamine + glycine + ATP = N(1)-(5-phospho-beta-D-ribosyl)glycinamide + ADP + phosphate + H(+). It participates in purine metabolism; IMP biosynthesis via de novo pathway; N(1)-(5-phospho-D-ribosyl)glycinamide from 5-phospho-alpha-D-ribose 1-diphosphate: step 2/2. This chain is Phosphoribosylamine--glycine ligase, found in Caldanaerobacter subterraneus subsp. tengcongensis (strain DSM 15242 / JCM 11007 / NBRC 100824 / MB4) (Thermoanaerobacter tengcongensis).